The sequence spans 142 residues: Large ribosomal subunit protein uL13 (142 aa).

It belongs to the universal ribosomal protein uL13 family. In terms of assembly, part of the 50S ribosomal subunit.

Functionally, this protein is one of the early assembly proteins of the 50S ribosomal subunit, although it is not seen to bind rRNA by itself. It is important during the early stages of 50S assembly. The polypeptide is Large ribosomal subunit protein uL13 (Opitutus terrae (strain DSM 11246 / JCM 15787 / PB90-1)).